A 962-amino-acid chain; its full sequence is Glycine dehydrogenase (decarboxylating) (962 aa).

Lysine 709 bears the N6-(pyridoxal phosphate)lysine mark.

The protein belongs to the GcvP family. The glycine cleavage system is composed of four proteins: P, T, L and H. Pyridoxal 5'-phosphate is required as a cofactor.

The catalysed reaction is N(6)-[(R)-lipoyl]-L-lysyl-[glycine-cleavage complex H protein] + glycine + H(+) = N(6)-[(R)-S(8)-aminomethyldihydrolipoyl]-L-lysyl-[glycine-cleavage complex H protein] + CO2. In terms of biological role, the glycine cleavage system catalyzes the degradation of glycine. The P protein binds the alpha-amino group of glycine through its pyridoxal phosphate cofactor; CO(2) is released and the remaining methylamine moiety is then transferred to the lipoamide cofactor of the H protein. This Shewanella baltica (strain OS195) protein is Glycine dehydrogenase (decarboxylating).